The primary structure comprises 144 residues: Mercuric transport protein MerC (144 aa).

Residues 1-21 (MSAITRIIDKIGIVGTIVGSF) lie on the Cytoplasmic side of the membrane. The chain crosses the membrane as a helical span at residues 22 to 42 (SCAMCFPAAASLGAAIGLGFL). 2 residues coordinate Hg(2+): cysteine 23 and cysteine 26. Residues 43-46 (SQWE) are Periplasmic-facing. A helical transmembrane segment spans residues 47–67 (GLFVQWLIPIFASVALLATLA). Over 68 to 78 (GWFSHRQWQRT) the chain is Cytoplasmic. The helical transmembrane segment at 79 to 99 (LLGSIGPVLALVGVFGLTHHF) threads the bilayer. Residues 100–103 (LDKD) are Periplasmic-facing. The chain crosses the membrane as a helical span at residues 104–124 (LARVIFYTGLVVMFLVSIWDM). Residues 125–144 (VNPANRRCATDGCETPAPRS) lie on the Cytoplasmic side of the membrane.

In terms of assembly, monomer.

It is found in the cell inner membrane. Inhibited by the thiol-modifying reagent N-ethylmaleimide (NEM). Its function is as follows. Involved in mercuric ion uptake. The chain is Mercuric transport protein MerC from Acidithiobacillus ferrooxidans (Thiobacillus ferrooxidans).